The sequence spans 475 residues: Ribulose bisphosphate carboxylase large chain (475 aa).

Residues Met1–Ser2 constitute a propeptide that is removed on maturation. An N-acetylproline modification is found at Pro3. Lys14 carries the post-translational modification N6,N6,N6-trimethyllysine. Positions 123 and 173 each coordinate substrate. Lys175 acts as the Proton acceptor in catalysis. A substrate-binding site is contributed by Lys177. Residues Lys201, Asp203, and Glu204 each coordinate Mg(2+). Lys201 is subject to N6-carboxylysine. His294 (proton acceptor) is an active-site residue. Substrate contacts are provided by Arg295, His327, and Ser379.

It belongs to the RuBisCO large chain family. Type I subfamily. As to quaternary structure, heterohexadecamer of 8 large chains and 8 small chains; disulfide-linked. The disulfide link is formed within the large subunit homodimers. Mg(2+) serves as cofactor. In terms of processing, the disulfide bond which can form in the large chain dimeric partners within the hexadecamer appears to be associated with oxidative stress and protein turnover.

The protein resides in the plastid. It localises to the chloroplast. It catalyses the reaction 2 (2R)-3-phosphoglycerate + 2 H(+) = D-ribulose 1,5-bisphosphate + CO2 + H2O. The catalysed reaction is D-ribulose 1,5-bisphosphate + O2 = 2-phosphoglycolate + (2R)-3-phosphoglycerate + 2 H(+). In terms of biological role, ruBisCO catalyzes two reactions: the carboxylation of D-ribulose 1,5-bisphosphate, the primary event in carbon dioxide fixation, as well as the oxidative fragmentation of the pentose substrate in the photorespiration process. Both reactions occur simultaneously and in competition at the same active site. This is Ribulose bisphosphate carboxylase large chain (rbcL) from Cucumis sativus (Cucumber).